A 296-amino-acid chain; its full sequence is Probable cell wall protein PGA41 (296 aa).

The signal sequence occupies residues 1–18 (MKFTIVLFTLISVTVAAA). Residues 146-212 (IASSTKESSS…ITTISSDSST (67 aa)) are compositionally biased toward low complexity. A disordered region spans residues 146–276 (IASSTKESSS…PNSSQTAPGA (131 aa)). The segment covering 220 to 245 (QGGGGNSGNNGSNGDGGNDASGGGGV) has biased composition (gly residues). Residues Asn229 and Asn268 are each glycosylated (N-linked (GlcNAc...) asparagine). Residues 247–274 (NENEQASSPPSSQSSTNSNQPNSSQTAP) show a composition bias toward low complexity. Residue Gly275 is the site of GPI-anchor amidated glycine attachment. A propeptide spans 276–296 (AANYLSSVSVGTLMILVLGLI) (removed in mature form).

The protein belongs to the IHD1 family. In terms of processing, the GPI-anchor is attached to the protein in the endoplasmic reticulum and serves to target the protein to the cell surface. There, the glucosamine-inositol phospholipid moiety is cleaved off and the GPI-modified mannoprotein is covalently attached via its lipidless GPI glycan remnant to the 1,6-beta-glucan of the outer cell wall layer.

Its subcellular location is the secreted. It localises to the cell wall. It is found in the membrane. Probable GPI-anchored cell wall protein that may be involved in cell wall organization, hyphal growth, as well as in virulence. The polypeptide is Probable cell wall protein PGA41 (PGA41) (Candida albicans (strain SC5314 / ATCC MYA-2876) (Yeast)).